Reading from the N-terminus, the 131-residue chain is Large ribosomal subunit protein bL12c (131 aa).

Belongs to the bacterial ribosomal protein bL12 family. As to quaternary structure, homodimer. Part of the ribosomal stalk of the 50S ribosomal subunit. Forms a multimeric L10(L12)X complex, where L10 forms an elongated spine to which 2 to 4 L12 dimers bind in a sequential fashion. Binds GTP-bound translation factors.

Its subcellular location is the plastid. The protein localises to the chloroplast. Forms part of the ribosomal stalk which helps the ribosome interact with GTP-bound translation factors. Is thus essential for accurate translation. This chain is Large ribosomal subunit protein bL12c, found in Euglena gracilis.